A 235-amino-acid chain; its full sequence is Small ribosomal subunit protein uS2 (235 aa).

The protein belongs to the universal ribosomal protein uS2 family.

The polypeptide is Small ribosomal subunit protein uS2 (Caldanaerobacter subterraneus subsp. tengcongensis (strain DSM 15242 / JCM 11007 / NBRC 100824 / MB4) (Thermoanaerobacter tengcongensis)).